The following is a 589-amino-acid chain: Carbonic anhydrase (589 aa).

Alpha-carbonic anhydrase domains are found at residues His59 to Lys316 and Asp321 to Asn585. Residue Thr258 to Thr259 coordinates substrate. A catalytic region spans residues Met390–Ala589. 3 residues coordinate Zn(2+): His420, His422, and His440.

This sequence belongs to the alpha-carbonic anhydrase family. Requires Zn(2+) as cofactor.

It catalyses the reaction hydrogencarbonate + H(+) = CO2 + H2O. In terms of biological role, reversible hydration of carbon dioxide. The polypeptide is Carbonic anhydrase (DCA) (Dunaliella salina (Green alga)).